The following is a 164-amino-acid chain: Nucleotide-binding protein EF_1165 (164 aa).

Belongs to the YajQ family.

In terms of biological role, nucleotide-binding protein. The chain is Nucleotide-binding protein EF_1165 from Enterococcus faecalis (strain ATCC 700802 / V583).